A 268-amino-acid polypeptide reads, in one-letter code: Ribosomal RNA small subunit methyltransferase A (268 aa).

S-adenosyl-L-methionine-binding residues include asparagine 16, leucine 18, glycine 43, glutamate 64, aspartate 89, and asparagine 110.

The protein belongs to the class I-like SAM-binding methyltransferase superfamily. rRNA adenine N(6)-methyltransferase family. RsmA subfamily.

It is found in the cytoplasm. The enzyme catalyses adenosine(1518)/adenosine(1519) in 16S rRNA + 4 S-adenosyl-L-methionine = N(6)-dimethyladenosine(1518)/N(6)-dimethyladenosine(1519) in 16S rRNA + 4 S-adenosyl-L-homocysteine + 4 H(+). Specifically dimethylates two adjacent adenosines (A1518 and A1519) in the loop of a conserved hairpin near the 3'-end of 16S rRNA in the 30S particle. May play a critical role in biogenesis of 30S subunits. The protein is Ribosomal RNA small subunit methyltransferase A of Pseudomonas savastanoi pv. phaseolicola (strain 1448A / Race 6) (Pseudomonas syringae pv. phaseolicola (strain 1448A / Race 6)).